A 100-amino-acid chain; its full sequence is Small ribosomal subunit protein uS14c (100 aa).

Belongs to the universal ribosomal protein uS14 family. As to quaternary structure, part of the 30S ribosomal subunit.

The protein resides in the plastid. Its subcellular location is the chloroplast. In terms of biological role, binds 16S rRNA, required for the assembly of 30S particles. This is Small ribosomal subunit protein uS14c from Aethionema grandiflorum (Persian stone-cress).